The sequence spans 495 residues: Cobyric acid synthase (495 aa).

Residues 252 to 440 (RPKVVVLAYP…VHGLFADDGL (189 aa)) enclose the GATase cobBQ-type domain. The Nucleophile role is filled by Cys334. The active site involves His432.

This sequence belongs to the CobB/CobQ family. CobQ subfamily.

It participates in cofactor biosynthesis; adenosylcobalamin biosynthesis. Functionally, catalyzes amidations at positions B, D, E, and G on adenosylcobyrinic A,C-diamide. NH(2) groups are provided by glutamine, and one molecule of ATP is hydrogenolyzed for each amidation. The chain is Cobyric acid synthase from Bradyrhizobium sp. (strain ORS 278).